Reading from the N-terminus, the 559-residue chain is Nucleoprotein (559 aa).

Residues 53-235 (MRKEKRTDSD…ITQEQSQINI (183 aa)) are binding site for the cap structure m7GTP. 2 residues coordinate Mn(2+): D378 and E380. The Zn(2+) site is built by E388, C495, H498, and C519. Residue D523 participates in Mn(2+) binding.

The protein belongs to the arenaviridae nucleocapsid protein family. In terms of assembly, homomultimerizes to form the nucleocapsid. Binds to viral genomic RNA. Interacts with glycoprotein G2. Interacts with protein Z; this interaction probably directs the encapsidated genome to budding sites. Interacts with protein L; this interaction does not interfere with Z-L interaction. Interacts with host IKBKE (via Protein kinase domain); the interaction inhibits IKBKE kinase activity.

Its subcellular location is the virion. It is found in the host cytoplasm. Its function is as follows. Encapsidates the genome, protecting it from nucleases. The encapsidated genomic RNA is termed the nucleocapsid (NC). Serves as template for viral transcription and replication. The increased presence of protein N in host cell does not seem to trigger the switch from transcription to replication as observed in other negative strain RNA viruses. Through the interaction with host IKBKE, strongly inhibits the phosphorylation and nuclear translocation of host IRF3, a protein involved in interferon activation pathway, leading to the inhibition of interferon-beta and IRF3-dependent promoters activation. Also encodes a functional 3'-5' exoribonuclease that degrades preferentially dsRNA substrates and thereby participates in the suppression of interferon induction. The sequence is that of Nucleoprotein from Sooretamys angouya (Paraguayan rice rat).